The following is a 234-amino-acid chain: Triggering receptor expressed on myeloid cells 1 (234 aa).

An N-terminal signal peptide occupies residues 1–20; sequence MRKTRLWGLLWMLFVSELRA. Topologically, residues 21–205 are extracellular; sequence ATKLTEEKYE…TDIIRVPVFN (185 aa). Residues 26–134 form the Ig-like V-type domain; sequence EEKYELKEGQ…LFDRIRLVVT (109 aa). Cys-41 and Cys-113 are disulfide-bonded. N-linked (GlcNAc...) asparagine glycans are attached at residues Asn-146, Asn-191, and Asn-194. A helical membrane pass occupies residues 206–226; that stretch reads IVILLAGGFLSKSLVFSVLFA. Residues 227 to 234 lie on the Cytoplasmic side of the membrane; it reads VTLRSFVP.

Monomer. Homomultimer; when activated. Interacts with TYROBP/DAP12. Interacts with TLR4. Glycosylated. Mostly expressed by immune cells of the myeloid lineage, such as monocytes, macrophages, neutrophils and dendritic cells. Expression is associated with a mature stage of myeloid development. Highly expressed in adult liver, lung and spleen than in corresponding fetal tissue. Also expressed in the lymph node, placenta, spinal cord and heart tissues. Isoform 2 was detected in the lung, liver and mature monocytes.

The protein localises to the cell membrane. It localises to the secreted. Cell surface receptor that plays important roles in innate and adaptive immunity by amplifying inflammatory responses. Upon activation by various ligands such as PGLYRP1, HMGB1 or HSP70, multimerizes and forms a complex with transmembrane adapter TYROBP/DAP12. In turn, initiates a SYK-mediated cascade of tyrosine phosphorylation, activating multiple downstream mediators such as BTK, MAPK1, MAPK3 or phospholipase C-gamma. This cascade promotes the neutrophil- and macrophage-mediated release of pro-inflammatory cytokines and/or chemokines, as well as their migration and thereby amplifies inflammatory responses that are triggered by bacterial and fungal infections. By also promoting the amplification of inflammatory signals that are initially triggered by Toll-like receptor (TLR) and NOD-like receptor engagement, plays a major role in the pathophysiology of acute and chronic inflammatory diseases of different etiologies including septic shock and atherosclerosis. Its function is as follows. Acts as a decoy receptor, counterbalancing TREM1 pro-inflammatory activity through the neutralization of its ligand. The protein is Triggering receptor expressed on myeloid cells 1 (TREM1) of Homo sapiens (Human).